A 326-amino-acid polypeptide reads, in one-letter code: tRNA-modifying protein YgfZ (326 aa).

The folate site is built by Trp27 and Trp189.

It belongs to the tRNA-modifying YgfZ family.

The protein resides in the cytoplasm. Its function is as follows. Folate-binding protein involved in regulating the level of ATP-DnaA and in the modification of some tRNAs. It is probably a key factor in regulatory networks that act via tRNA modification, such as initiation of chromosomal replication. In Shigella dysenteriae serotype 1 (strain Sd197), this protein is tRNA-modifying protein YgfZ.